The primary structure comprises 125 residues: Large ribosomal subunit protein bL19 (125 aa).

Belongs to the bacterial ribosomal protein bL19 family.

Its function is as follows. This protein is located at the 30S-50S ribosomal subunit interface and may play a role in the structure and function of the aminoacyl-tRNA binding site. The polypeptide is Large ribosomal subunit protein bL19 (Wolbachia sp. subsp. Brugia malayi (strain TRS)).